Consider the following 199-residue polypeptide: NADH-quinone oxidoreductase subunit C (199 aa).

It belongs to the complex I 30 kDa subunit family. In terms of assembly, NDH-1 is composed of 14 different subunits. Subunits NuoB, C, D, E, F, and G constitute the peripheral sector of the complex.

The protein localises to the cell inner membrane. The enzyme catalyses a quinone + NADH + 5 H(+)(in) = a quinol + NAD(+) + 4 H(+)(out). In terms of biological role, NDH-1 shuttles electrons from NADH, via FMN and iron-sulfur (Fe-S) centers, to quinones in the respiratory chain. The immediate electron acceptor for the enzyme in this species is believed to be ubiquinone. Couples the redox reaction to proton translocation (for every two electrons transferred, four hydrogen ions are translocated across the cytoplasmic membrane), and thus conserves the redox energy in a proton gradient. The protein is NADH-quinone oxidoreductase subunit C of Cupriavidus taiwanensis (strain DSM 17343 / BCRC 17206 / CCUG 44338 / CIP 107171 / LMG 19424 / R1) (Ralstonia taiwanensis (strain LMG 19424)).